The chain runs to 413 residues: MKHQETTSQQYNFSIIKHGDISTPQGFTAGGMHIGLRANKKDFGWIYSSSLASAAAVYTLNQFKAAPLIVTEDTLQKSKGKLQALVVNSANANSCTGQQGIDDARQTQTWVAQQLQIPSEHVAVASTGVIGEYLPMDKIKTGTEHIKDANFATPGAFNEAILTTDTCTKHIAVSLKIDGKTVTIGGSTKGSGMIHPNMATMLAFITTDASIESNTLHQLLKSSTDHTFNMITVDGDTSTNDMVLVMANHQVEHQILSQDHPQWETFVDAFNFVCTFLAKAIARDGEGATKLISVNVSGAKSISDARKIGKTIVSSNLVKSAIFGEDANFGRIITAIGYSGCEIDPNCTYVQLNQIPVVDKGMAVLFDEQAMSNTLTHENVTIDVQLGLGNAAATAYGCDLSYDYVRINASYRT.

Positions 163, 189, 200, 286, 408, and 413 each coordinate substrate. The active-site Nucleophile is threonine 200.

This sequence belongs to the ArgJ family. In terms of assembly, heterotetramer of two alpha and two beta chains.

It localises to the cytoplasm. It catalyses the reaction N(2)-acetyl-L-ornithine + L-glutamate = N-acetyl-L-glutamate + L-ornithine. It carries out the reaction L-glutamate + acetyl-CoA = N-acetyl-L-glutamate + CoA + H(+). It functions in the pathway amino-acid biosynthesis; L-arginine biosynthesis; L-ornithine and N-acetyl-L-glutamate from L-glutamate and N(2)-acetyl-L-ornithine (cyclic): step 1/1. The protein operates within amino-acid biosynthesis; L-arginine biosynthesis; N(2)-acetyl-L-ornithine from L-glutamate: step 1/4. In terms of biological role, catalyzes two activities which are involved in the cyclic version of arginine biosynthesis: the synthesis of N-acetylglutamate from glutamate and acetyl-CoA as the acetyl donor, and of ornithine by transacetylation between N(2)-acetylornithine and glutamate. The polypeptide is Arginine biosynthesis bifunctional protein ArgJ (Staphylococcus aureus (strain COL)).